The sequence spans 458 residues: Retinoic acid receptor RXR-beta (458 aa).

Over residues 1-17 (GEAGRDGMGDTGRDSRS) the composition is skewed to basic and acidic residues. Residues 1–105 (GEAGRDGMGD…GGSGPPEDVK (105 aa)) are disordered. Residues 1-129 (GEAGRDGMGD…PGGPGAGKRL (129 aa)) form a modulating region. A compositionally biased stretch (low complexity) spans 18–31 (PDSSSPNPLSQGIP). Positions 32-56 (PSSPPGPPHTPSAPPPPMPPPPLGS) are enriched in pro residues. Positions 57–68 (PFPVISSSMGSP) are enriched in low complexity. Pro residues predominate over residues 69–78 (GLPPPAPPGF). 2 consecutive NR C4-type zinc fingers follow at residues 130-150 (CAIC…CEGC) and 166-190 (CRDN…YQKC). Residues 130-195 (CAICGDRSSG…RYQKCLATGM (66 aa)) constitute a DNA-binding region (nuclear receptor). The hinge stretch occupies residues 196–220 (KREAVQEERQRGKDKDGDGDGAGGA). Residues 201-213 (QEERQRGKDKDGD) show a composition bias toward basic and acidic residues. Disordered stretches follow at residues 201-223 (QEER…APEE) and 238-261 (QKSD…NDPV). An NR LBD domain is found at 221-454 (PEEMPVDRIL…TFLMEMLEAP (234 aa)). Positions 245–255 (EGPGATGGGGS) are enriched in gly residues.

It belongs to the nuclear hormone receptor family. NR2 subfamily. In terms of assembly, homodimer (in vitro). Heterodimer with other retinoic acid receptor family members. Binds DNA preferentially as a RAR/RXR heterodimer. Interacts with NR1H3. Interacts with AKAP13. Expressed in the adrenal gland with main expression in the zona fasciculata (at protein level).

Its subcellular location is the nucleus. The protein localises to the cytoplasm. Its function is as follows. Receptor for retinoic acid. Retinoic acid receptors bind as heterodimers to their target response elements in response to their ligands, all-trans or 9-cis retinoic acid, and regulate gene expression in various biological processes. The RAR/RXR heterodimers bind to the retinoic acid response elements (RARE). This chain is Retinoic acid receptor RXR-beta (Rxrb), found in Rattus norvegicus (Rat).